The following is a 284-amino-acid chain: Phosphoribosylaminoimidazole-succinocarboxamide synthase (284 aa).

It belongs to the SAICAR synthetase family.

The catalysed reaction is 5-amino-1-(5-phospho-D-ribosyl)imidazole-4-carboxylate + L-aspartate + ATP = (2S)-2-[5-amino-1-(5-phospho-beta-D-ribosyl)imidazole-4-carboxamido]succinate + ADP + phosphate + 2 H(+). It functions in the pathway purine metabolism; IMP biosynthesis via de novo pathway; 5-amino-1-(5-phospho-D-ribosyl)imidazole-4-carboxamide from 5-amino-1-(5-phospho-D-ribosyl)imidazole-4-carboxylate: step 1/2. This chain is Phosphoribosylaminoimidazole-succinocarboxamide synthase, found in Chromobacterium violaceum (strain ATCC 12472 / DSM 30191 / JCM 1249 / CCUG 213 / NBRC 12614 / NCIMB 9131 / NCTC 9757 / MK).